The following is a 71-amino-acid chain: Ubiquinol-cytochrome c reductase complex assembly factor 6 (71 aa).

Residues 1–8 are Mitochondrial matrix-facing; the sequence is MPAGVPMS. A helical; Signal-anchor for type II membrane protein membrane pass occupies residues 9–25; sequence TYLKMLAASLLAMCAGA. Residues 26-71 lie on the Mitochondrial intermembrane side of the membrane; that stretch reads EVVHRYYRPDLTIPEIPPKRGELKTELLGLKERKHKPQISQQEELK. The disordered stretch occupies residues 52 to 71; the sequence is LLGLKERKHKPQISQQEELK.

The protein belongs to the UQCC6 family. Interacts with UQCRC1. Interacts with UQCRQ. Interacts with UQCC5. Forms a complex, named COMB/coordinator of mitochondrial CYTB biogenesis, composed of UQCC1, UQCC2, UQCC4, UQCC5 and UQCC6; stabilizes nascent cytochrome b/MT-CYB and promotes its membrane insertion. Forms a complex, named COMA, composed of UQCC1, UQCC2 and UQCC4; activates MT-CYB translation. Forms a complex, named COMC, composed of UQCC1, UQCC2; UQCC3 and UQCC4; mediates MT-CYB hemylation and association with the first nuclear-encoded complex III subunit UQCRQ. Interacts with MT-CYB.

The protein resides in the mitochondrion inner membrane. Required for the assembly and stability of the mitochondrial ubiquinol-cytochrome c reductase complex (complex III (CIII) or cytochrome b-c1 complex), a multisubunit transmembrane complex that is part of the mitochondrial electron transport chain (ETC) which drives oxidative phosphorylation. Mediates early complex III biogenesis. Participates in regulating the levels of electron transport chain proteins, and therefore energy supply, in response to changes in energy demand. Also required for cytochrome c oxidase complex (complex IV) assembly. This is Ubiquinol-cytochrome c reductase complex assembly factor 6 from Pongo abelii (Sumatran orangutan).